Here is a 472-residue protein sequence, read N- to C-terminus: tRNA-2-methylthio-N(6)-dimethylallyladenosine synthase (472 aa).

The 117-residue stretch at 22 to 138 (RSYWITTFGC…LETLLQQVDS (117 aa)) folds into the MTTase N-terminal domain. Positions 31, 67, 101, 173, 177, and 180 each coordinate [4Fe-4S] cluster. The region spanning 159–396 (RDSAICGWVN…NALVERNARE (238 aa)) is the Radical SAM core domain. The region spanning 399–467 (IRYQGRTEEV…SFSLSGTPLP (69 aa)) is the TRAM domain.

This sequence belongs to the methylthiotransferase family. MiaB subfamily. In terms of assembly, monomer. Requires [4Fe-4S] cluster as cofactor.

The protein localises to the cytoplasm. It carries out the reaction N(6)-dimethylallyladenosine(37) in tRNA + (sulfur carrier)-SH + AH2 + 2 S-adenosyl-L-methionine = 2-methylsulfanyl-N(6)-dimethylallyladenosine(37) in tRNA + (sulfur carrier)-H + 5'-deoxyadenosine + L-methionine + A + S-adenosyl-L-homocysteine + 2 H(+). Functionally, catalyzes the methylthiolation of N6-(dimethylallyl)adenosine (i(6)A), leading to the formation of 2-methylthio-N6-(dimethylallyl)adenosine (ms(2)i(6)A) at position 37 in tRNAs that read codons beginning with uridine. This Synechococcus sp. (strain CC9902) protein is tRNA-2-methylthio-N(6)-dimethylallyladenosine synthase.